We begin with the raw amino-acid sequence, 664 residues long: Glycine--tRNA ligase beta subunit (664 aa).

Belongs to the class-II aminoacyl-tRNA synthetase family. As to quaternary structure, tetramer of two alpha and two beta subunits.

It is found in the cytoplasm. The enzyme catalyses tRNA(Gly) + glycine + ATP = glycyl-tRNA(Gly) + AMP + diphosphate. This is Glycine--tRNA ligase beta subunit from Rickettsia peacockii (strain Rustic).